Consider the following 437-residue polypeptide: Nickel-cobalt-cadmium resistance protein NccC (437 aa).

A signal peptide spans 1–48 (MGAVLKAEANIFRSHPFRPMNQATPKKLRSAPCIGVALLLMATGSIQA).

It belongs to the outer membrane factor (OMF) (TC 1.B.17) family.

Its function is as follows. Component of the NCC cation-efflux system that confers resistance to nickel, cobalt and cadmium. The polypeptide is Nickel-cobalt-cadmium resistance protein NccC (nccC) (Alcaligenes xylosoxydans xylosoxydans (Achromobacter xylosoxidans)).